The following is a 101-amino-acid chain: MAKQSMKAREVKRVALADKYFAKRAELKAIISDVDATDEDRWNAVLKLQTLPRDSSPSRQRNRCRQTGRPHAFLRKFGLSRIKVREAAMRGEIPGLKKASW.

It belongs to the universal ribosomal protein uS14 family. As to quaternary structure, part of the 30S ribosomal subunit. Contacts proteins S3 and S10.

Functionally, binds 16S rRNA, required for the assembly of 30S particles and may also be responsible for determining the conformation of the 16S rRNA at the A site. This chain is Small ribosomal subunit protein uS14, found in Salmonella paratyphi A (strain ATCC 9150 / SARB42).